Consider the following 128-residue polypeptide: Large-conductance mechanosensitive channel (128 aa).

The Cytoplasmic segment spans residues 1–16; the sequence is MNFIKEFREFAMRGNV. A helical transmembrane segment spans residues 17 to 45; the sequence is VDMAVGVIIGSAFGKIVSSLVSDIFTPVL. Residues 46-74 lie on the Periplasmic side of the membrane; that stretch reads GILTGGIDFKDMKFVLAQAQGDVPAVTLN. A helical transmembrane segment spans residues 75–94; it reads YGLFIQNVIDFIIIAFAIFM. Over 95–128 the chain is Cytoplasmic; it reads MIKVINKVRKPEEKKTAPKAETLLTEIRDLLKNK.

The protein belongs to the MscL family. Homopentamer.

It is found in the cell inner membrane. Functionally, channel that opens in response to stretch forces in the membrane lipid bilayer. Forms a nonselective ion channel with a conductance of about 4 nanosiemens. May participate in the regulation of osmotic pressure changes within the cell. The chain is Large-conductance mechanosensitive channel from Haemophilus influenzae (strain ATCC 51907 / DSM 11121 / KW20 / Rd).